We begin with the raw amino-acid sequence, 229 residues long: 2-C-methyl-D-erythritol 4-phosphate cytidylyltransferase (229 aa).

The protein belongs to the IspD/TarI cytidylyltransferase family. IspD subfamily. In terms of assembly, homodimer.

The catalysed reaction is 2-C-methyl-D-erythritol 4-phosphate + CTP + H(+) = 4-CDP-2-C-methyl-D-erythritol + diphosphate. It functions in the pathway isoprenoid biosynthesis; isopentenyl diphosphate biosynthesis via DXP pathway; isopentenyl diphosphate from 1-deoxy-D-xylulose 5-phosphate: step 2/6. Catalyzes the formation of 4-diphosphocytidyl-2-C-methyl-D-erythritol from CTP and 2-C-methyl-D-erythritol 4-phosphate (MEP). This is 2-C-methyl-D-erythritol 4-phosphate cytidylyltransferase from Wigglesworthia glossinidia brevipalpis.